The sequence spans 141 residues: Nucleoside diphosphate kinase (141 aa).

The ATP site is built by lysine 11, phenylalanine 59, arginine 87, threonine 93, arginine 104, and asparagine 114. Histidine 117 acts as the Pros-phosphohistidine intermediate in catalysis.

This sequence belongs to the NDK family. In terms of assembly, homotetramer. Mg(2+) serves as cofactor.

Its subcellular location is the cytoplasm. It carries out the reaction a 2'-deoxyribonucleoside 5'-diphosphate + ATP = a 2'-deoxyribonucleoside 5'-triphosphate + ADP. The enzyme catalyses a ribonucleoside 5'-diphosphate + ATP = a ribonucleoside 5'-triphosphate + ADP. Functionally, major role in the synthesis of nucleoside triphosphates other than ATP. The ATP gamma phosphate is transferred to the NDP beta phosphate via a ping-pong mechanism, using a phosphorylated active-site intermediate. This chain is Nucleoside diphosphate kinase, found in Nitrosomonas europaea (strain ATCC 19718 / CIP 103999 / KCTC 2705 / NBRC 14298).